Reading from the N-terminus, the 476-residue chain is uncharacterized protein (476 aa).

Positions 147–204 (DVRLAELRRRRAELEAEIAAVEAGDIAVLDPTAVRDRYQQLSTTARELLSDFREVEEN) form a coiled coil.

This is an uncharacterized protein from Mycolicibacterium smegmatis (strain ATCC 700084 / mc(2)155) (Mycobacterium smegmatis).